Reading from the N-terminus, the 340-residue chain is MAPEERADAARLLRGFERRFLAARALRSFPWQSLEEKLRDSSGSELLLDILQKTVKHPLCVKHPPSVKYSRSFLSELIRKHEAVHTEPLDELYQALAEVLTAEDPTHCHRSYLLPSGDSVTLCESTAIVSHGTTGLVTWNAALYLAEWAVENPAVFAHRMVLELGSGAGLTGLAICKTCRPRAYIFSDCHSHVLEQLRGNVLLNGFSLEPSIDTWAQHPGPHTPEAERPWVTVARLDWDTVTAPQLAAFQPDVVLAADVLYCPETVLSLVGVLRKLSTCRKDQRAPDAYIAFTVRNPETCQLFTTELGQAGIPWEEVPCHDQKLFPYEEHSEMAILKLTL.

N-acetylmethionine is present on Met1. Residues Trp139, 165-167, Trp238, and Ala257 each bind S-adenosyl-L-methionine; that span reads GSG.

The protein belongs to the class I-like SAM-binding methyltransferase superfamily. EEF2KMT family. Interacts with FAM86B2 and FAM86C1P.

Its subcellular location is the cytoplasm. It catalyses the reaction L-lysyl-[protein] + 3 S-adenosyl-L-methionine = N(6),N(6),N(6)-trimethyl-L-lysyl-[protein] + 3 S-adenosyl-L-homocysteine + 3 H(+). In terms of biological role, catalyzes the trimethylation of eukaryotic elongation factor 2 (EEF2) on 'Lys-525'. The chain is Protein-lysine N-methyltransferase EEF2KMT (EEF2KMT) from Bos taurus (Bovine).